Reading from the N-terminus, the 330-residue chain is 4-hydroxythreonine-4-phosphate dehydrogenase (330 aa).

Substrate-binding residues include histidine 135 and threonine 136. 3 residues coordinate a divalent metal cation: histidine 165, histidine 210, and histidine 266. Lysine 274, asparagine 283, and arginine 292 together coordinate substrate.

This sequence belongs to the PdxA family. Homodimer. Zn(2+) is required as a cofactor. Mg(2+) serves as cofactor. The cofactor is Co(2+).

The protein resides in the cytoplasm. It catalyses the reaction 4-(phosphooxy)-L-threonine + NAD(+) = 3-amino-2-oxopropyl phosphate + CO2 + NADH. It participates in cofactor biosynthesis; pyridoxine 5'-phosphate biosynthesis; pyridoxine 5'-phosphate from D-erythrose 4-phosphate: step 4/5. Catalyzes the NAD(P)-dependent oxidation of 4-(phosphooxy)-L-threonine (HTP) into 2-amino-3-oxo-4-(phosphooxy)butyric acid which spontaneously decarboxylates to form 3-amino-2-oxopropyl phosphate (AHAP). The protein is 4-hydroxythreonine-4-phosphate dehydrogenase of Vibrio cholerae serotype O1 (strain ATCC 39315 / El Tor Inaba N16961).